Reading from the N-terminus, the 477-residue chain is Zinc metalloproteinase/disintegrin (477 aa).

Residues 1–19 (MIQVLLVIICLAVPYQGSS) form the signal peptide. Positions 20–186 (IILESGNVND…PIKKASQSNL (167 aa)) are excised as a propeptide. The Peptidase M12B domain maps to 192–388 (RYIELVIVAD…QKPQCILNKP (197 aa)). 2 residues coordinate Ca(2+): Glu-195 and Asp-279. 3 cysteine pairs are disulfide-bonded: Cys-303-Cys-383, Cys-343-Cys-367, and Cys-345-Cys-350. His-328 contacts Zn(2+). Glu-329 is an active-site residue. Zn(2+) is bound by residues His-332 and His-338. 2 residues coordinate Ca(2+): Cys-383 and Asn-386. Positions 389–404 (LRTDTVSTPVSGNELL) are excised as a propeptide. A Disintegrin domain is found at 396–477 (TPVSGNELLE…AGCPRNPFHA (82 aa)). Cystine bridges form between Cys-410–Cys-425, Cys-412–Cys-420, Cys-419–Cys-442, Cys-433–Cys-439, Cys-438–Cys-463, and Cys-451–Cys-470. The Cell attachment site signature appears at 455-457 (RGD).

The protein belongs to the venom metalloproteinase (M12B) family. P-II subfamily. P-IIa sub-subfamily. Monomer. Zn(2+) is required as a cofactor. In terms of tissue distribution, expressed by the venom gland.

The protein resides in the secreted. Functionally, impairs hemostasis in the envenomed animal. In terms of biological role, inhibits platelet aggregation induced by ADP, thrombin, platelet-activating factor and collagen. Acts by inhibiting fibrinogen interaction with platelet receptors GPIIb/GPIIIa (ITGA2B/ITGB3). The chain is Zinc metalloproteinase/disintegrin from Gloydius halys (Chinese water mocassin).